The sequence spans 430 residues: Tol-Pal system protein TolB (430 aa).

Residues 1-21 (MKQAFRVALSVLMLFVAVAHA) form the signal peptide.

This sequence belongs to the TolB family. In terms of assembly, the Tol-Pal system is composed of five core proteins: the inner membrane proteins TolA, TolQ and TolR, the periplasmic protein TolB and the outer membrane protein Pal. They form a network linking the inner and outer membranes and the peptidoglycan layer.

Its subcellular location is the periplasm. In terms of biological role, part of the Tol-Pal system, which plays a role in outer membrane invagination during cell division and is important for maintaining outer membrane integrity. TolB occupies a key intermediary position in the Tol-Pal system because it communicates directly with both membrane-embedded components, Pal in the outer membrane and TolA in the inner membrane. This is Tol-Pal system protein TolB from Erwinia tasmaniensis (strain DSM 17950 / CFBP 7177 / CIP 109463 / NCPPB 4357 / Et1/99).